Here is a 365-residue protein sequence, read N- to C-terminus: Peptide chain release factor 2 (365 aa).

An N5-methylglutamine modification is found at Gln-251.

The protein belongs to the prokaryotic/mitochondrial release factor family. Post-translationally, methylated by PrmC. Methylation increases the termination efficiency of RF2.

It is found in the cytoplasm. In terms of biological role, peptide chain release factor 2 directs the termination of translation in response to the peptide chain termination codons UGA and UAA. In Campylobacter jejuni subsp. doylei (strain ATCC BAA-1458 / RM4099 / 269.97), this protein is Peptide chain release factor 2.